The sequence spans 417 residues: MFSRDLTIAKYDAELFEAMQQEALRQEEHIELIASENYTSPAVMEAQGSVLTNKYAEGYPGKRYYGGCEYVDVVEQLAIDRAKELFGADYANVQPHAGSQANAAVYLALLSAGDTILGMSLAHGGHLTHGASVSSSGKLYNAIQYGIDGNGLIDYDEVERLAVEHKPKMIVAGFSAYSQVLDFARFRAIADKVGAYLFVDMAHVAGLVAAGVYPNPVPFADVVTTTTHKTLRGPRGGLILARANADIEKKLNSAVFPGAQGGPLEHVIAAKAICFKEALQPEFKAYQQQVVKNAQAMASVFIERGFDVVSGGTQNHLFLLSLIKQEISGKDADAALGKAFITVNKNSVPNDPRSPFVTSGLRFGTPAVTTRGFKEAECKELAGWICDILADLNNEAVIDAVREKVKAICKKLPVYGN.

(6S)-5,6,7,8-tetrahydrofolate-binding positions include leucine 121 and 125 to 127 (GHL). An N6-(pyridoxal phosphate)lysine modification is found at lysine 229. Residue 354–356 (SPF) participates in (6S)-5,6,7,8-tetrahydrofolate binding.

The protein belongs to the SHMT family. As to quaternary structure, homodimer. Requires pyridoxal 5'-phosphate as cofactor.

The protein resides in the cytoplasm. The enzyme catalyses (6R)-5,10-methylene-5,6,7,8-tetrahydrofolate + glycine + H2O = (6S)-5,6,7,8-tetrahydrofolate + L-serine. The protein operates within one-carbon metabolism; tetrahydrofolate interconversion. It functions in the pathway amino-acid biosynthesis; glycine biosynthesis; glycine from L-serine: step 1/1. Catalyzes the reversible interconversion of serine and glycine with tetrahydrofolate (THF) serving as the one-carbon carrier. This reaction serves as the major source of one-carbon groups required for the biosynthesis of purines, thymidylate, methionine, and other important biomolecules. Also exhibits THF-independent aldolase activity toward beta-hydroxyamino acids, producing glycine and aldehydes, via a retro-aldol mechanism. The chain is Serine hydroxymethyltransferase 2 from Pseudomonas putida (strain ATCC 47054 / DSM 6125 / CFBP 8728 / NCIMB 11950 / KT2440).